Here is a 37-residue protein sequence, read N- to C-terminus: Large ribosomal subunit protein bL36 (37 aa).

Belongs to the bacterial ribosomal protein bL36 family.

The protein is Large ribosomal subunit protein bL36 of Persephonella marina (strain DSM 14350 / EX-H1).